Here is a 61-residue protein sequence, read N- to C-terminus: MAFDKKLLEIVACPVCKGKLEYDKAAEQLICKFDRLAYPITEGIPVLLENRATPWQEQTAE.

The protein belongs to the UPF0434 family.

This chain is UPF0434 protein Sama_1339, found in Shewanella amazonensis (strain ATCC BAA-1098 / SB2B).